A 436-amino-acid chain; its full sequence is MPKPVVAIVGRPNVGKSTIFNRIVGERISIVEDIPGVTRDRIYSAGEWLNHEFNIIDTGGIDIGDEPFLTQIRQQAEVAIDEADVIIFMTNGRDGVTAADEEVAKILYRSNKPVVLAVNKVDNPEMRNEIYDFYALGFGEPFPISGTHGLGLGDLLDEVAQHFPKVEEEEYDDETIRFCLIGRPNVGKSSLVNALLGQERVIVSNVAGTTRDAVDTPYTKDGQDYVIIDTAGMRKKGKVYESTEKYSVLRALRAIERSDVVLVVLDGEEGIIEQDKKIAGYAHDSGRAVVIVVNKWDAVKKDEKTMKAFEDNIRAHFQFLDYAPIVFLSAKTKKRTQTLLPVINQVSESHNIRVQTNVLNDVIMDAVAMNPTPTHNGSRLKIFYATQVAVKPPTFVVFVNDPELMHFSYERFLKNRLRESFGFVGTPIRIIARARD.

2 consecutive EngA-type G domains span residues 4-167 (PVVA…PKVE) and 176-351 (IRFC…ESHN). Residues 10–17 (GRPNVGKS), 57–61 (DTGGI), 119–122 (NKVD), 182–189 (GRPNVGKS), 229–233 (DTAGM), and 294–297 (NKWD) each bind GTP. One can recognise a KH-like domain in the interval 352-436 (IRVQTNVLND…PIRIIARARD (85 aa)).

This sequence belongs to the TRAFAC class TrmE-Era-EngA-EngB-Septin-like GTPase superfamily. EngA (Der) GTPase family. As to quaternary structure, associates with the 50S ribosomal subunit.

In terms of biological role, GTPase that plays an essential role in the late steps of ribosome biogenesis. The sequence is that of GTPase Der from Bacillus cytotoxicus (strain DSM 22905 / CIP 110041 / 391-98 / NVH 391-98).